Here is a 791-residue protein sequence, read N- to C-terminus: Phosphoenolpyruvate synthase (791 aa).

Position 416 is a phosphothreonine (Thr-416). Catalysis depends on His-418, which acts as the Tele-phosphohistidine intermediate. Positions 508, 575, 677, 698, 699, 700, and 701 each coordinate substrate. Glu-677 is a binding site for Mg(2+). Asp-701 is a binding site for Mg(2+). Tyr-744 is modified (phosphotyrosine). Cys-748 (proton donor) is an active-site residue.

This sequence belongs to the PEP-utilizing enzyme family. The cofactor is Mg(2+).

It catalyses the reaction pyruvate + ATP + H2O = phosphoenolpyruvate + AMP + phosphate + 2 H(+). It functions in the pathway carbohydrate biosynthesis; gluconeogenesis. Catalyzes the phosphorylation of pyruvate to phosphoenolpyruvate. The protein is Phosphoenolpyruvate synthase (ppsA) of Pseudomonas aeruginosa (strain UCBPP-PA14).